Reading from the N-terminus, the 375-residue chain is Succinyl-diaminopimelate desuccinylase (375 aa).

H66 contributes to the Zn(2+) binding site. The active site involves D68. D99 serves as a coordination point for Zn(2+). The active-site Proton acceptor is E133. Residues E134, E162, and H348 each coordinate Zn(2+).

The protein belongs to the peptidase M20A family. DapE subfamily. As to quaternary structure, homodimer. The cofactor is Zn(2+). Co(2+) serves as cofactor.

The enzyme catalyses N-succinyl-(2S,6S)-2,6-diaminopimelate + H2O = (2S,6S)-2,6-diaminopimelate + succinate. It participates in amino-acid biosynthesis; L-lysine biosynthesis via DAP pathway; LL-2,6-diaminopimelate from (S)-tetrahydrodipicolinate (succinylase route): step 3/3. In terms of biological role, catalyzes the hydrolysis of N-succinyl-L,L-diaminopimelic acid (SDAP), forming succinate and LL-2,6-diaminopimelate (DAP), an intermediate involved in the bacterial biosynthesis of lysine and meso-diaminopimelic acid, an essential component of bacterial cell walls. In Escherichia coli O157:H7, this protein is Succinyl-diaminopimelate desuccinylase.